We begin with the raw amino-acid sequence, 238 residues long: Uridylate kinase (238 aa).

12 to 15 serves as a coordination point for ATP; that stretch reads KLSG. Residue Gly54 coordinates UMP. 2 residues coordinate ATP: Gly55 and Arg59. UMP contacts are provided by residues Asp74 and 135–142; that span reads TGNPYFTT. ATP is bound by residues Thr162, Asn163, Tyr168, and Asp171.

The protein belongs to the UMP kinase family. As to quaternary structure, homohexamer.

It is found in the cytoplasm. It catalyses the reaction UMP + ATP = UDP + ADP. It participates in pyrimidine metabolism; CTP biosynthesis via de novo pathway; UDP from UMP (UMPK route): step 1/1. Its activity is regulated as follows. Inhibited by UTP. Functionally, catalyzes the reversible phosphorylation of UMP to UDP. The protein is Uridylate kinase of Nitrobacter winogradskyi (strain ATCC 25391 / DSM 10237 / CIP 104748 / NCIMB 11846 / Nb-255).